A 233-amino-acid polypeptide reads, in one-letter code: Nickel import system ATP-binding protein NikE (233 aa).

The region spanning 2–228 (IELKHVTFGY…DRHPYTKELV (227 aa)) is the ABC transporter domain. 35–42 (GESGCGKS) is an ATP binding site.

This sequence belongs to the ABC transporter superfamily. As to quaternary structure, the complex is composed of two ATP-binding proteins (NikD and NikE), two transmembrane proteins (NikB and NikC) and a solute-binding protein (NikA).

Its subcellular location is the cell membrane. It catalyses the reaction Ni(2+)(out) + ATP + H2O = Ni(2+)(in) + ADP + phosphate + H(+). Its function is as follows. Part of the ABC transporter complex NikABCDE (Opp2) involved in nickel import. Probably responsible for energy coupling to the transport system. In Staphylococcus aureus (strain USA300), this protein is Nickel import system ATP-binding protein NikE.